The chain runs to 140 residues: Small ribosomal subunit protein uS12 (140 aa).

Asp-102 is modified (3-methylthioaspartic acid).

It belongs to the universal ribosomal protein uS12 family. Part of the 30S ribosomal subunit. Contacts proteins S8 and S17. May interact with IF1 in the 30S initiation complex.

In terms of biological role, with S4 and S5 plays an important role in translational accuracy. Its function is as follows. Interacts with and stabilizes bases of the 16S rRNA that are involved in tRNA selection in the A site and with the mRNA backbone. Located at the interface of the 30S and 50S subunits, it traverses the body of the 30S subunit contacting proteins on the other side and probably holding the rRNA structure together. The combined cluster of proteins S8, S12 and S17 appears to hold together the shoulder and platform of the 30S subunit. The polypeptide is Small ribosomal subunit protein uS12 (Bacillus cereus (strain G9842)).